The sequence spans 434 residues: V-type ATP synthase beta chain (434 aa).

This sequence belongs to the ATPase alpha/beta chains family.

In terms of biological role, produces ATP from ADP in the presence of a proton gradient across the membrane. The V-type beta chain is a regulatory subunit. This is V-type ATP synthase beta chain from Borreliella afzelii (strain PKo) (Borrelia afzelii).